The sequence spans 59 residues: Sperm protamine P1-type (59 aa).

Positions 1-59 (MARYRRNRSRSRSRRRRRRRGGRGGRRGRRRRRHGQRRRGRRGRERTRRRRRRRRRSSS) are disordered.

This sequence belongs to the protamine P1 family. Testis.

It is found in the nucleus. The protein resides in the chromosome. Its function is as follows. Protamines substitute for histones in the chromatin of sperm during the haploid phase of spermatogenesis. They compact sperm DNA into a highly condensed, stable and inactive complex. The sequence is that of Sperm protamine P1-type from Chrysemys picta bellii (Western painted turtle).